The chain runs to 175 residues: Disulfide bond formation protein B (175 aa).

Topologically, residues 1-13 are cytoplasmic; the sequence is MTALTRFAHSRSS. The chain crosses the membrane as a helical span at residues 14-30; the sequence is WFLLTGTAIGLEAAALY. The Periplasmic segment spans residues 31–48; it reads FQYVMKLDPCVMCIYQRL. A disulfide bridge links C40 with C43. A helical membrane pass occupies residues 49–64; sequence AVFGILVAGLIGMTAP. At 65-71 the chain is on the cytoplasmic side; it reads KYRLIRI. Residues 72–89 traverse the membrane as a helical segment; sequence LGASCWAVSATWGLKLAL. Residues 90–144 lie on the Periplasmic side of the membrane; that stretch reads ALVNMQNNPSPFATCSFLPEFPTWMPLHEWFPAVMLPTGMCTDLPWRFMDVTMAE. The cysteines at positions 104 and 130 are disulfide-linked. Residues 145-163 traverse the membrane as a helical segment; sequence WMVVVFSTFLVIWLLFIVP. At 164–175 the chain is on the cytoplasmic side; sequence ILSGSTKPSLYK.

It belongs to the DsbB family.

It localises to the cell inner membrane. Required for disulfide bond formation in some periplasmic proteins. Acts by oxidizing the DsbA protein. The polypeptide is Disulfide bond formation protein B (Shewanella sp. (strain W3-18-1)).